Consider the following 701-residue polypeptide: Epithelial splicing regulatory protein 2 (701 aa).

RRM domains follow at residues 226–303, 327–407, and 448–523; these read TVIR…KATG, VIIR…RSTA, and CVRL…VEVF.

Belongs to the ESRP family.

Its subcellular location is the nucleus. MRNA splicing factor that regulates the formation of epithelial cell-specific isoforms. Specifically regulates the expression of FGFR2-IIIb, an epithelial cell-specific isoform of FGFR2. Acts by directly binding specific sequences in mRNAs. Binds the GU-rich sequence motifs in the ISE/ISS-3, a cis-element regulatory region present in the mRNA of FGFR2. The chain is Epithelial splicing regulatory protein 2 (ESRP2) from Gallus gallus (Chicken).